A 324-amino-acid chain; its full sequence is MTTTLITHIINPLAYIVPVLLAVAFLTLLERKVLGYMQLRKGPNIVGPYGLLQPIADGLKLFIKEPVRPSTSSPFLFLATPMLALTLALTLWAPMPIPYPITDLNLGVLFVLALSSLAVYSILGSGWASNSKYALIGALRAVAQTISYEVSLGLILLSVIIFTGGFTLQTFNVAQESIWLLVPAWPLAAMWYISTLAETNRAPFDLTEGESELVSGFNVEYAGGPFALFFLAEYANILLMNTLSAILFLGASHIPAFPELTAVNLMTKAALLSVVFLWVRASYPRFRYDQLMHLVWKSFLPLTLALVLWHLALPTAMAGLPPQL.

The next 9 membrane-spanning stretches (helical) occupy residues 9–29, 43–63, 75–95, 106–126, 146–166, 177–197, 237–257, 259–279, and 299–319; these read IINP…LTLL, PNIV…KLFI, FLFL…WAPM, LGVL…LGSG, ISYE…TGGF, SIWL…STLA, ILLM…IPAF, ELTA…FLWV, and FLPL…AMAG.

The protein belongs to the complex I subunit 1 family.

Its subcellular location is the mitochondrion inner membrane. The catalysed reaction is a ubiquinone + NADH + 5 H(+)(in) = a ubiquinol + NAD(+) + 4 H(+)(out). Its function is as follows. Core subunit of the mitochondrial membrane respiratory chain NADH dehydrogenase (Complex I) that is believed to belong to the minimal assembly required for catalysis. Complex I functions in the transfer of electrons from NADH to the respiratory chain. The immediate electron acceptor for the enzyme is believed to be ubiquinone. This is NADH-ubiquinone oxidoreductase chain 1 (MT-ND1) from Salmo salar (Atlantic salmon).